We begin with the raw amino-acid sequence, 105 residues long: Large ribosomal subunit protein bL21c (105 aa).

The protein belongs to the bacterial ribosomal protein bL21 family. As to quaternary structure, part of the 50S ribosomal subunit.

Its subcellular location is the plastid. It is found in the chloroplast. Its function is as follows. This protein binds to 23S rRNA. The protein is Large ribosomal subunit protein bL21c of Phaeodactylum tricornutum (strain CCAP 1055/1).